The chain runs to 466 residues: UDP-N-acetylmuramate--L-alanine ligase (466 aa).

114–120 is a binding site for ATP; that stretch reads GTHGKTT.

This sequence belongs to the MurCDEF family.

Its subcellular location is the cytoplasm. The catalysed reaction is UDP-N-acetyl-alpha-D-muramate + L-alanine + ATP = UDP-N-acetyl-alpha-D-muramoyl-L-alanine + ADP + phosphate + H(+). Its pathway is cell wall biogenesis; peptidoglycan biosynthesis. Its function is as follows. Cell wall formation. In Chlorobium phaeobacteroides (strain DSM 266 / SMG 266 / 2430), this protein is UDP-N-acetylmuramate--L-alanine ligase.